The primary structure comprises 337 residues: Phosphate acyltransferase (337 aa).

It belongs to the PlsX family. Homodimer. Probably interacts with PlsY.

It localises to the cytoplasm. The enzyme catalyses a fatty acyl-[ACP] + phosphate = an acyl phosphate + holo-[ACP]. The protein operates within lipid metabolism; phospholipid metabolism. In terms of biological role, catalyzes the reversible formation of acyl-phosphate (acyl-PO(4)) from acyl-[acyl-carrier-protein] (acyl-ACP). This enzyme utilizes acyl-ACP as fatty acyl donor, but not acyl-CoA. This is Phosphate acyltransferase from Aromatoleum aromaticum (strain DSM 19018 / LMG 30748 / EbN1) (Azoarcus sp. (strain EbN1)).